Consider the following 1680-residue polypeptide: GRIP and coiled-coil domain-containing protein 2 (1680 aa).

Methionine 1 bears the N-acetylmethionine mark. A compositionally biased stretch (low complexity) spans 1 to 14 (MEDSAPDAVAAAPS). 2 disordered regions span residues 1-23 (MEDS…KLET) and 1468-1522 (KSEP…SSAG). A coiled-coil region spans residues 31-1614 (KFAKKQMMLL…REKSVANLEY (1584 aa)). A compositionally biased stretch (polar residues) spans 1469 to 1484 (SEPSTRSPASSHQPSK). Residues serine 1475 and serine 1479 each carry the phosphoserine modification. The interval 1570–1609 (HLNGLLRETEATNAILMEQIKLLKSEIRRLERNQEREKSV) is mediates interaction with RAB6A. A mediates interaction with RAB9A region spans residues 1570-1680 (HLNGLLRETE…SYLHSWSGLR (111 aa)). Residues 1605 to 1655 (REKSVANLEYLKNVLLRFIFLKPGSERERLLPVIDTMLQLSPEEKGKLATV) enclose the GRIP domain.

In terms of assembly, homodimer. Interacts (via GRIP domain) with RAB6A (preferentially in its GTP-bound form). May interact (RAB6A-dependent) with ARL1; might be involved in GCC2 Golgi localization. Interacts (probably via GRIP domain) with RAB9A (preferentially in its GTP-bound form). Interacts with CLASP1 and CLASP2; recruits both proteins to membranes of the TGN. Interacts with STX16.

It localises to the cytoplasm. Its subcellular location is the golgi apparatus. It is found in the trans-Golgi network membrane. Golgin which probably tethers transport vesicles to the trans-Golgi network (TGN) and regulates vesicular transport between the endosomes and the Golgi. As a RAB9A effector it is involved in recycling of the mannose 6-phosphate receptor from the late endosomes to the TGN. May also play a role in transport between the recycling endosomes and the Golgi. Required for maintenance of the Golgi structure, it is involved in the biogenesis of noncentrosomal, Golgi-associated microtubules through recruitment of CLASP1 and CLASP2. This Mus musculus (Mouse) protein is GRIP and coiled-coil domain-containing protein 2 (Gcc2).